The primary structure comprises 759 residues: LPS-assembly protein LptD (759 aa).

The first 45 residues, 1–45, serve as a signal peptide directing secretion; the sequence is MKPLKLELNPRDFNHYQAAFLPYRMKIKQPLHVLCFSVCSLSAVA.

It belongs to the LptD family. As to quaternary structure, component of the lipopolysaccharide transport and assembly complex. Interacts with LptE and LptA.

The protein resides in the cell outer membrane. In terms of biological role, together with LptE, is involved in the assembly of lipopolysaccharide (LPS) at the surface of the outer membrane. The protein is LPS-assembly protein LptD of Pseudoalteromonas atlantica (strain T6c / ATCC BAA-1087).